We begin with the raw amino-acid sequence, 623 residues long: Set1/Ash2 histone methyltransferase complex subunit ASH2 (623 aa).

Over residues Met1–Pro18 the composition is skewed to gly residues. A PHD-type; atypical zinc finger spans residues Met1–Asn62. A disordered region spans residues Met1–Glu99. The span at Ala36–Ala56 shows a compositional bias: low complexity. The DNA-binding stretch occupies residues Leu63–Thr172. Positions Gly84–Gly95 are enriched in polar residues. Residue Ser96 is modified to Phosphoserine. The segment at Cys112–Cys145 adopts a C4-type zinc-finger fold. Residues Leu230–Pro247 show a composition bias toward basic and acidic residues. The segment at Leu230–Pro326 is disordered. Residues Asn265–Asn277 are compositionally biased toward polar residues. A compositionally biased stretch (gly residues) spans Leu278–Gly290. Residue Arg291 is modified to Asymmetric dimethylarginine; by PRMT1 and PRMT5. Ser311 carries the post-translational modification Phosphoserine. The segment at Ser311–Pro623 is interaction with RBBP5. In terms of domain architecture, B30.2/SPRY spans Leu355–Lys578.

Interacts with HCFC1. Core component of several methyltransferase-containing complexes including MLL1/MLL, MLL2/3 (also named ASCOM complex) and MLL4/WBP7. Each complex is at least composed of ASH2L, RBBP5, WDR5, DPY30, one or more specific histone methyltransferases (KMT2A/MLL1, KMT2D/MLL2, KMT2C/MLL3 and KMT2B/MLL4), and the facultative components PAGR1, BACC1, CHD8, E2F6, HCFC1, HCFC2, HSP70, INO80C, KDM6A, KANSL1, LAS1L, MAX, MCRS1, MEN1, MGA, KAT8/MOF, NCOA6, PAXIP1/PTIP, PELP1, PHF20, PRP31, RING2, RUVB1/TIP49A, RUVB2/TIP49B, SENP3, TAF1, TAF4, TAF6, TAF7, TAF9, TEX10 and alpha- and beta-tubulin. Component of the SET1 complex, at least composed of the catalytic subunit (SETD1A or SETD1B), WDR5, WDR82, RBBP5, ASH2L/ASH2, CXXC1/CFP1, HCFC1 and DPY30. Found in a complex with RBBP5, ASH2L, DPY30, KMT2A, KMT2D and WDR5. Component of a histone methylation complex composed of at least ZNF335, RBBP5, ASH2L and WDR5; the complex may have histone H3-specific methyltransferase activity, however does not have specificity for 'Lys-4' of histone H3. Within the complex, interacts with ZNF335. Interacts with RBBP5. Components of this complex may associate with components of a nuclear receptor-mediated transcription complex to form a complex at least composed of ZNF335, HCFC1, CCAR2, EMSY, MKI67, RBBP5, ASH2L and WDR5. Within this complex also interacts with CCAR2 and EMSY. Interacts with DPY30. Interacts with SETD1A and SETD1B. Post-translationally, both monomethylated and dimethylated on arginine residues in the C-terminus. Arg-291 is the major site. Methylation is not required for nuclear localization, nor for MLL complex integrity or maintenance of global histone H3K4me3 levels. Ubiquitously expressed, with abundant expression in the heart, skeletal muscle and kidney. Low expression is seen in spleen, lung and testis.

It localises to the nucleus. Its function is as follows. Transcriptional regulator. Component or associated component of some histone methyltransferase complexes which regulates transcription through recruitment of those complexes to gene promoters. Component of the Set1/Ash2 histone methyltransferase (HMT) complex, a complex that specifically methylates 'Lys-4' of histone H3, but not if the neighboring 'Lys-9' residue is already methylated. As part of the MLL1/MLL complex it is involved in methylation and dimethylation at 'Lys-4' of histone H3. May play a role in hematopoiesis. In association with RBBP5 and WDR5, stimulates the histone methyltransferase activities of KMT2A, KMT2B, KMT2C, KMT2D, SETD1A and SETD1B. This Mus musculus (Mouse) protein is Set1/Ash2 histone methyltransferase complex subunit ASH2 (Ash2l).